We begin with the raw amino-acid sequence, 394 residues long: 8-amino-7-oxononanoate synthase (394 aa).

Arg21 contacts substrate. 112–113 contacts pyridoxal 5'-phosphate; that stretch reads GY. His137 is a substrate binding site. 3 residues coordinate pyridoxal 5'-phosphate: Ser183, His211, and Thr239. Lys242 carries the N6-(pyridoxal phosphate)lysine modification. Thr358 contributes to the substrate binding site.

Belongs to the class-II pyridoxal-phosphate-dependent aminotransferase family. BioF subfamily. Homodimer. The cofactor is pyridoxal 5'-phosphate.

It catalyses the reaction 6-carboxyhexanoyl-[ACP] + L-alanine + H(+) = (8S)-8-amino-7-oxononanoate + holo-[ACP] + CO2. It functions in the pathway cofactor biosynthesis; biotin biosynthesis. In terms of biological role, catalyzes the decarboxylative condensation of pimeloyl-[acyl-carrier protein] and L-alanine to produce 8-amino-7-oxononanoate (AON), [acyl-carrier protein], and carbon dioxide. The protein is 8-amino-7-oxononanoate synthase of Burkholderia thailandensis (strain ATCC 700388 / DSM 13276 / CCUG 48851 / CIP 106301 / E264).